The sequence spans 216 residues: MKGKFIVFEGVDGSGKTTQIKLLGEKLESMGCPVVYTREPGGTRVGERIREILLNPLYGELVPWAEALLYAAARAQHVAQVILPALREGKVVLCDRFTDSSLAYQGYGRGVDIEMLEQVNRPAAAGVVPDLVLVLDFDREGQTERMARSGRSADRIEREAQEFYRRVRSGYLALAARAPRRYRVIDASRAEKLVHLDVLKAAEEVLDAFLKGNSRA.

G10 to T17 contacts ATP.

This sequence belongs to the thymidylate kinase family.

The catalysed reaction is dTMP + ATP = dTDP + ADP. In terms of biological role, phosphorylation of dTMP to form dTDP in both de novo and salvage pathways of dTTP synthesis. The polypeptide is Thymidylate kinase (Pelotomaculum thermopropionicum (strain DSM 13744 / JCM 10971 / SI)).